We begin with the raw amino-acid sequence, 345 residues long: Uroporphyrinogen decarboxylase (345 aa).

Residues 28–32 (RQAGR), Asp77, Tyr153, Ser208, and His322 contribute to the substrate site.

Belongs to the uroporphyrinogen decarboxylase family. Homodimer.

It localises to the cytoplasm. The catalysed reaction is uroporphyrinogen III + 4 H(+) = coproporphyrinogen III + 4 CO2. Its pathway is porphyrin-containing compound metabolism; protoporphyrin-IX biosynthesis; coproporphyrinogen-III from 5-aminolevulinate: step 4/4. Catalyzes the decarboxylation of four acetate groups of uroporphyrinogen-III to yield coproporphyrinogen-III. The protein is Uroporphyrinogen decarboxylase of Solibacter usitatus (strain Ellin6076).